A 458-amino-acid chain; its full sequence is Argininosuccinate lyase (458 aa).

It belongs to the lyase 1 family. Argininosuccinate lyase subfamily.

The protein localises to the cytoplasm. The catalysed reaction is 2-(N(omega)-L-arginino)succinate = fumarate + L-arginine. The protein operates within amino-acid biosynthesis; L-arginine biosynthesis; L-arginine from L-ornithine and carbamoyl phosphate: step 3/3. The chain is Argininosuccinate lyase from Salmonella heidelberg (strain SL476).